Consider the following 258-residue polypeptide: UPF0246 protein VV0659 (258 aa).

It belongs to the UPF0246 family.

In Vibrio vulnificus (strain YJ016), this protein is UPF0246 protein VV0659.